We begin with the raw amino-acid sequence, 157 residues long: MIRIGQGYDVHKLAYDRELIVGGIKIPYEKGLLGHSDADVLLHAITDAIIGAIGAGDIGHFFPDTDMAFKDADSAELLAEIWQKVEADGFRLGNLDATIIAEKPKMAPYVEQMKLRIAELLHADSAQVNVKATTTEKLGFTGREEGIASLAVVLLEK.

A divalent metal cation contacts are provided by D9 and H11. 4-CDP-2-C-methyl-D-erythritol 2-phosphate is bound by residues D9 to H11 and H35 to S36. H43 is a binding site for a divalent metal cation. Residues D57–G59, F62–D66, A101–A107, T133–E136, F140, and R143 contribute to the 4-CDP-2-C-methyl-D-erythritol 2-phosphate site.

This sequence belongs to the IspF family. As to quaternary structure, homotrimer. Requires a divalent metal cation as cofactor.

It catalyses the reaction 4-CDP-2-C-methyl-D-erythritol 2-phosphate = 2-C-methyl-D-erythritol 2,4-cyclic diphosphate + CMP. It functions in the pathway isoprenoid biosynthesis; isopentenyl diphosphate biosynthesis via DXP pathway; isopentenyl diphosphate from 1-deoxy-D-xylulose 5-phosphate: step 4/6. Its function is as follows. Involved in the biosynthesis of isopentenyl diphosphate (IPP) and dimethylallyl diphosphate (DMAPP), two major building blocks of isoprenoid compounds. Catalyzes the conversion of 4-diphosphocytidyl-2-C-methyl-D-erythritol 2-phosphate (CDP-ME2P) to 2-C-methyl-D-erythritol 2,4-cyclodiphosphate (ME-CPP) with a corresponding release of cytidine 5-monophosphate (CMP). The protein is 2-C-methyl-D-erythritol 2,4-cyclodiphosphate synthase of Listeria monocytogenes serotype 4a (strain HCC23).